We begin with the raw amino-acid sequence, 556 residues long: 2-succinyl-5-enolpyruvyl-6-hydroxy-3-cyclohexene-1-carboxylate synthase (556 aa).

Belongs to the TPP enzyme family. MenD subfamily. Homodimer. Mg(2+) serves as cofactor. Requires Mn(2+) as cofactor. It depends on thiamine diphosphate as a cofactor.

It catalyses the reaction isochorismate + 2-oxoglutarate + H(+) = 5-enolpyruvoyl-6-hydroxy-2-succinyl-cyclohex-3-ene-1-carboxylate + CO2. Its pathway is quinol/quinone metabolism; 1,4-dihydroxy-2-naphthoate biosynthesis; 1,4-dihydroxy-2-naphthoate from chorismate: step 2/7. The protein operates within quinol/quinone metabolism; menaquinone biosynthesis. Functionally, catalyzes the thiamine diphosphate-dependent decarboxylation of 2-oxoglutarate and the subsequent addition of the resulting succinic semialdehyde-thiamine pyrophosphate anion to isochorismate to yield 2-succinyl-5-enolpyruvyl-6-hydroxy-3-cyclohexene-1-carboxylate (SEPHCHC). The protein is 2-succinyl-5-enolpyruvyl-6-hydroxy-3-cyclohexene-1-carboxylate synthase of Escherichia coli O7:K1 (strain IAI39 / ExPEC).